The primary structure comprises 427 residues: Beta-1,3-galactosyl-O-glycosyl-glycoprotein beta-1,6-N-acetylglucosaminyltransferase (427 aa).

Residues 1–9 are Cytoplasmic-facing; it reads MLRKLWRRK. The segment at 5 to 9 is mediates interaction with GOLPH3 and is necessary and sufficient for localization to the Golgi; that stretch reads LWRRK. The helical; Signal-anchor for type II membrane protein transmembrane segment at 10-32 threads the bilayer; it reads LFSFPTKYYFLFLAFSVVTFTVL. Residues 33–121 are stem region; that stretch reads RIHQKTEFVN…EPLSKEEAGF (89 aa). Over 33 to 427 the chain is Lumenal; the sequence is RIHQKTEFVN…RHKALETLKP (395 aa). 2 N-linked (GlcNAc...) asparagine glycosylation sites follow: Asn58 and Asn95. Disulfide bonds link Cys59–Cys412, Cys100–Cys172, Cys151–Cys199, and Cys372–Cys380. The tract at residues 122 to 427 is catalytic; it reads PIAYSIVVHH…RHKALETLKP (306 aa). UDP-N-acetyl-alpha-D-glucosamine-binding positions include 128-130, 155-157, and Tyr187; these read VVH and DAK. The a glycoprotein site is built by Glu243, Lys251, Arg254, Glu320, Lys341, and Tyr358. Glu320 functions as the Nucleophile in the catalytic mechanism. Residues Arg377 and Lys400 each contribute to the UDP-N-acetyl-alpha-D-glucosamine site.

The protein belongs to the glycosyltransferase 14 family. As to quaternary structure, interacts with GOLPH3; may control GCNT1 retention in the Golgi. In terms of tissue distribution, expressed in tracheal submucosal glands and epithelium (at protein level).

It localises to the golgi apparatus membrane. It catalyses the reaction a 3-O-[beta-D-galactosyl-(1-&gt;3)-N-acetyl-alpha-D-galactosaminyl]-L-seryl-[protein] + UDP-N-acetyl-alpha-D-glucosamine = 3-O-{beta-D-galactosyl-(1-&gt;3)-[N-acetyl-beta-D-glucosaminyl-(1-&gt;6)]-N-acetyl-alpha-D-galactosaminyl}-L-seryl-[protein] + UDP + H(+). The catalysed reaction is a 3-O-[beta-D-galactosyl-(1-&gt;3)-N-acetyl-alpha-D-galactosaminyl]-L-threonyl-[protein] + UDP-N-acetyl-alpha-D-glucosamine = a 3-O-{beta-D-galactosyl-(1-&gt;3)-[N-acetyl-beta-D-glucosaminyl-(1-&gt;6)]-N-acetyl-alpha-D-galactosaminyl}-L-threonyl-[protein] + UDP + H(+). The enzyme catalyses a globoside GalGb4Cer + UDP-N-acetyl-alpha-D-glucosamine = a globoside GlcNAc-(beta1-&gt;6)-GalGb4Cer + UDP + H(+). It carries out the reaction a ganglioside GA1 + UDP-N-acetyl-alpha-D-glucosamine = a ganglioside beta-D-GlcNAc-(1-&gt;6)-GA1 + UDP + H(+). It functions in the pathway protein modification; protein glycosylation. It participates in glycolipid biosynthesis. In terms of biological role, glycosyltransferase that catalyzes the transfer of an N-acetylglucosamine (GlcNAc) moiety in beta1-6 linkage from UDP-GlcNAc onto mucin-type core 1 O-glycan to form the branched mucin-type core 2 O-glycan. The catalysis is metal ion-independent and occurs with inversion of the anomeric configuration of sugar donor. Selectively involved in synthesis of mucin-type core 2 O-glycans that serve as scaffolds for the display of selectin ligand sialyl Lewis X epitope by myeloid cells, with an impact on homeostasis and recruitment to inflammatory sites. Can also act on glycolipid substrates. Transfers GlcNAc moiety to GalGb4Cer globosides in a reaction step to the synthesis of stage-specific embryonic antigen 1 (SSEA-1) determinant. Can use Galbeta1-3GalNAcalpha1- and Galbeta1-3GalNAcbeta1- oligosaccharide derivatives as acceptor substrates. This chain is Beta-1,3-galactosyl-O-glycosyl-glycoprotein beta-1,6-N-acetylglucosaminyltransferase (GCNT1), found in Bos taurus (Bovine).